A 2009-amino-acid chain; its full sequence is MDVTVSQLVELFLQSPLVTWVKTFGSFGSGHQDNLTLYMDLVDGIFLNQIMLQIDPRPSNQRINKHVNNDVNLRIQNLSILVRNIKTYYQEVLQQLIVMNLPNVLMIGKDPLSGKSMEEIKKVLLLVLGCAVQCERKEEFIERIKQLDIETQAGIVAHIQEVTHNQENVFDLQWLDLPDVAPEELEALSRNMVFHLRRLIDERDECTELIVDLTQERDYLQTQQPPSPGKFSSPDSTPSPTSSLSSEDKQHLAVELADTKARLRRVRQELEEKTEQLADTRHEVDQLVLELQKAKQDNIQLAADARSARAYRDELDSLREKANRVERLEMDLVRCKEKLHDVDFYKARMEELREDNIILIETKAMLEEQLTASRARSDKVHELEKENLQLKSKLHDLELDRDADKKQIEKLLEEYMVLEMAQKQSMKESAHLGWELEQLSKNADLSDASRKSFVFELNECASSRILKLEKENQSLQSTIQGLRDTSLALEESSLKYGELEKENQQLSKKIEKLQTQLEREKQSNQDLETLSEELIREKEQLQSGMEALKADRARQIKDLEQEKGHLHQAVWSLRERPQVNSTKDVEKENRALHQAVTEAGSKLSQLELEKQQLHRDLEEAKEKGEQAEALEKELHRLEKENEQLTKEVTSLKAATEKVEALEHQSQGLELENRSLRKSLDTLQNVSVQLEGLERDKQQLGQENLELRKMVEAMRFTSAKMAQIETENRQLEREKEELRRDVELLKTLSKKSERLELSYQSVSAENLQLQHSLESSTHKSQALQRELSQLEAERQALRRDLETLQLTHKQLEGAEEDRKALEQEVAQLEKDKKLLEKEARRLWQQVELKDAILDDSAAKLSAAEKESRALDKELARCRDVGSKLKELEKDNRDLTKQVTMHTRTLTTLREDLVLEKLKSQQLSSELDKLSQELEKVGLSKDLLLQEDDGHGDGKGKTESALKTTLAMKEEKIVFLEAQVEEKESLSRQLQIELQMIKKEHEQLRQTQEGGDKAQNALKRPPGKVTSHQEKEAWEPSHKEATMELLRVKDRAIELERSNAALQAERQLLKEQLQHLETQNVSFSSQILTLQKQSAFLQEHTTTLQTQTAKLQVENSTLSSQNAALSAQYTVLQSQQAAKEAEHEGLQQQQEQLAAVYEALLQDHKHLGTLYECQSSEYEALIRQHSCLKTLHRNLELEHKELGERHGDLQQRKAELEELEKVLSTEREALEREQKTNAIATSENQRLRGELDRISFLHQQLKGEYEELHAHTKELKTSLNNSQLELSRWQVRFDELKEQHQSMDISLTKMDNHCELLSRLKGNLEEENHHLLSQIQLLSQQNQMLLEQNMESKEQYHEEQKQYIDKLNALRRHKEKLEEKIMDQYKFYDPAPKKKNHWIGAKALVKLIKPKKEGSRERLKSTTDSPPWQLEPSDPASPSPSQALRSQTENPDNPPSGPNCVEERDTHNGPVGKGPGDLKPKRGSPRGGSVDRTDTSTDPAVKSWPSEPGSRTFSTSATTAALSSSTPIPKHLGRTKGCNSDDNLCEPSSEPDGPYHRQQASRPNSLESSRNASSNSSPLSLKGSSDHLHSRCESFSSADLIPSRDPATLSRDGNTSGRGLLGRHEYPPPRNGPVSQETIQKKGAASTHTGVRPHSASPSSEMVTLEEFLEESNRGGSPTHDTPSCRDDLLSDYFRKAHDPPALGGQPGPPARKDGAKMPTSFVAPTIKMSINTSEGQQLKPGHYVKPNLRPSEAEALAGMPSRQVQPPQSLSLGRPRQTTMTQNCHMPVSRSASLSRAFSLASADLLRASGPEACRPESPQKPGGHEAAGARETSTHSLQGSHILARERTPIVGKADSPSPGQGTRGRPLDTRRFSLAPPKEERLAPLQQSATAPALATGCSSGSNPQIQHFSPTVAPAVRTKSKVPQHSGEVATVAPVRPGLGTSEGDGGPGHGYSEGLLTKSPGRSSDLPPHVKRGPDDFSQGSSSKSTPASPEPGGDPQTVWYEYGCV.

Residues 11–131 (LFLQSPLVTW…KVLLLVLGCA (121 aa)) enclose the Calponin-homology (CH) domain. Residues 221 to 251 (QTQQPPSPGKFSSPDSTPSPTSSLSSEDKQH) form a disordered region. Ser-227 and Ser-239 each carry phosphoserine. Residues 232 to 245 (SSPDSTPSPTSSLS) show a composition bias toward low complexity. Coiled-coil stretches lie at residues 247–425 (EDKQ…QKQS) and 456–1008 (ELNE…TQEG). At Ser-486 the chain carries Phosphoserine. Residues 1002–1036 (LRQTQEGGDKAQNALKRPPGKVTSHQEKEAWEPSH) form a disordered region. The span at 1025-1036 (SHQEKEAWEPSH) shows a compositional bias: basic and acidic residues. Residues 1190 to 1384 (HRNLELEHKE…LEEKIMDQYK (195 aa)) adopt a coiled-coil conformation. Residues 1410-1419 (KEGSRERLKS) show a composition bias toward basic and acidic residues. 2 disordered regions span residues 1410–1716 (KEGS…GAKM) and 1757–1787 (GMPS…HMPV). Residues 1430 to 1439 (PSDPASPSPS) are compositionally biased toward low complexity. Ser-1435 carries the phosphoserine modification. Positions 1440–1449 (QALRSQTENP) are enriched in polar residues. Composition is skewed to low complexity over residues 1510 to 1524 (TFST…SSST) and 1562 to 1581 (NSLE…SLKG). A Phosphoserine modification is found at Ser-1592. The GBA motif lies at 1652-1683 (HSASPSSEMVTLEEFLEESNRGGSPTHDTPSC). Basic and acidic residues predominate over residues 1681–1697 (PSCRDDLLSDYFRKAHD). Residues 1761–1783 (RQVQPPQSLSLGRPRQTTMTQNC) are compositionally biased toward polar residues. Position 1798 is a phosphoserine (Ser-1798). A disordered region spans residues 1808 to 2009 (SGPEACRPES…QTVWYEYGCV (202 aa)). Positions 1866–1883 (RPLDTRRFSLAPPKEERL) are enriched in basic and acidic residues. Positions 1898-1911 (GCSSGSNPQIQHFS) are enriched in polar residues. Over residues 1943–1954 (TSEGDGGPGHGY) the composition is skewed to gly residues. Positions 1981–1991 (SQGSSSKSTPA) are enriched in polar residues. The PDZ-binding signature appears at 2006–2009 (YGCV). Residues 2007 to 2009 (GCV) form a DVL1-binding region.

It belongs to the CCDC88 family. In terms of assembly, homooligomer. Interacts with DVL1 (via PDZ domain); dissociates following initiation of non-canonical Wnt signaling. Interacts (via C-terminus) with ligand-activated Wnt receptor FZD7; competes with DVL1 for binding to FZD7 and displaces DVL1 from ligand-activated FZD7. Interacts (via GBA motif) with guanine nucleotide-binding protein G(i) alpha subunits GNAI1, GNAI2 and GNAI3 (inactive GDP-bound form); interacts with higher affinity with GNAI1 and GNAI3 than with GNAI2 and interaction leads to G(i) alpha subunit activation. Does not interact with GNAO1.

Its subcellular location is the cytoplasm. The protein resides in the cell junction. Required for activation of guanine nucleotide-binding proteins (G-proteins) during non-canonical Wnt signaling. Binds to ligand-activated Wnt receptor FZD7, displacing DVL1 from the FZD7 receptor and leading to inhibition of canonical Wnt signaling. Acts as a non-receptor guanine nucleotide exchange factor by also binding to guanine nucleotide-binding protein G(i) alpha (Gi-alpha) subunits, leading to their activation. Binding to Gi-alpha subunits displaces the beta and gamma subunits from the heterotrimeric G-protein complex, triggering non-canonical Wnt responses such as activation of RAC1 and PI3K-AKT signaling. Promotes apical constriction of cells via ARHGEF18. The polypeptide is Protein Daple (Ccdc88c) (Mus musculus (Mouse)).